The following is a 529-amino-acid chain: Putative amidohydrolase YtcJ (529 aa).

It belongs to the metallo-dependent hydrolases superfamily.

The protein is Putative amidohydrolase YtcJ (ytcJ) of Bacillus subtilis (strain 168).